The following is a 207-amino-acid chain: Proteasome subunit beta (207 aa).

A propeptide spans 1–7 (removed in mature form; by autocatalysis); sequence MVEAFKG. The Nucleophile role is filled by T8.

This sequence belongs to the peptidase T1B family. As to quaternary structure, the 20S proteasome core is composed of 14 alpha and 14 beta subunits that assemble into four stacked heptameric rings, resulting in a barrel-shaped structure. The two inner rings, each composed of seven catalytic beta subunits, are sandwiched by two outer rings, each composed of seven alpha subunits. The catalytic chamber with the active sites is on the inside of the barrel. Has a gated structure, the ends of the cylinder being occluded by the N-termini of the alpha-subunits. Is capped at one or both ends by the proteasome regulatory ATPase, PAN.

It localises to the cytoplasm. The catalysed reaction is Cleavage of peptide bonds with very broad specificity.. Its activity is regulated as follows. The formation of the proteasomal ATPase PAN-20S proteasome complex, via the docking of the C-termini of PAN into the intersubunit pockets in the alpha-rings, triggers opening of the gate for substrate entry. Interconversion between the open-gate and close-gate conformations leads to a dynamic regulation of the 20S proteasome proteolysis activity. In terms of biological role, component of the proteasome core, a large protease complex with broad specificity involved in protein degradation. In Methanothrix thermoacetophila (strain DSM 6194 / JCM 14653 / NBRC 101360 / PT) (Methanosaeta thermophila), this protein is Proteasome subunit beta.